We begin with the raw amino-acid sequence, 468 residues long: ATP synthase subunit beta (468 aa).

155–162 (GGAGVGKT) provides a ligand contact to ATP.

This sequence belongs to the ATPase alpha/beta chains family. F-type ATPases have 2 components, CF(1) - the catalytic core - and CF(0) - the membrane proton channel. CF(1) has five subunits: alpha(3), beta(3), gamma(1), delta(1), epsilon(1). CF(0) has three main subunits: a(1), b(2) and c(9-12). The alpha and beta chains form an alternating ring which encloses part of the gamma chain. CF(1) is attached to CF(0) by a central stalk formed by the gamma and epsilon chains, while a peripheral stalk is formed by the delta and b chains.

It localises to the cell inner membrane. It catalyses the reaction ATP + H2O + 4 H(+)(in) = ADP + phosphate + 5 H(+)(out). In terms of biological role, produces ATP from ADP in the presence of a proton gradient across the membrane. The catalytic sites are hosted primarily by the beta subunits. The protein is ATP synthase subunit beta of Thermotoga neapolitana (strain ATCC 49049 / DSM 4359 / NBRC 107923 / NS-E).